Here is a 402-residue protein sequence, read N- to C-terminus: Acetylornithine aminotransferase (402 aa).

Pyridoxal 5'-phosphate-binding positions include 106-107 and F132; that span reads GA. Residue R135 coordinates N(2)-acetyl-L-ornithine. 217-220 contacts pyridoxal 5'-phosphate; it reads DEVQ. At K247 the chain carries N6-(pyridoxal phosphate)lysine. T275 provides a ligand contact to N(2)-acetyl-L-ornithine. Residue T276 coordinates pyridoxal 5'-phosphate.

It belongs to the class-III pyridoxal-phosphate-dependent aminotransferase family. ArgD subfamily. In terms of assembly, homodimer. Pyridoxal 5'-phosphate serves as cofactor.

The protein resides in the cytoplasm. It catalyses the reaction N(2)-acetyl-L-ornithine + 2-oxoglutarate = N-acetyl-L-glutamate 5-semialdehyde + L-glutamate. It participates in amino-acid biosynthesis; L-arginine biosynthesis; N(2)-acetyl-L-ornithine from L-glutamate: step 4/4. The sequence is that of Acetylornithine aminotransferase from Streptomyces coelicolor (strain ATCC BAA-471 / A3(2) / M145).